The following is a 259-amino-acid chain: MTISNGDVKSETCNNGSSEKKPFRIFVGYDPREDLAYQVCHHSITKRSSIPVEITPIIQSDLRKKGLYWRERGQLESTEFSFSRFLTPHLSDYQGWAMFVDCDFLYLADIKELTDLIDDKYAIMCVQHDYTPKETTKMDGAVQTVYPRKNWSSMVLYNCGHPKNKTLSPEIVNTQTGAFLHRFQWLEDEEIGSIPFVWNFLEGHNRVVEKDPTTQPKAVHYTRGGPWFDAWKDCEFADLWLNEMEEYNKENKKEADNAK.

Positions 236-259 (FADLWLNEMEEYNKENKKEADNAK) form a coiled coil.

Mostly expressed in pollen grains and pollen tubes, and, at low levels, in seedlings, roots, stems, leaves, flowers and siliques.

The protein resides in the cytoplasm. The protein localises to the cytosol. In terms of biological role, probable nucleotide-diphospho-sugar transferase required for pollen germination and tube growth. This is Protein CDI from Arabidopsis thaliana (Mouse-ear cress).